Here is a 204-residue protein sequence, read N- to C-terminus: Tumor protein D53 (204 aa).

The tract at residues 1-31 (MEAQAQGLLETEPLQGRDGDAVGSADFSSML) is disordered. Residues 22 to 73 (VGSADFSSMLSEEEKEELKAELIQLEDEITTLRQVLSAKERHLVEIKQKLGM) adopt a coiled-coil conformation. A phosphoserine mark is found at Ser-29, Ser-86, Ser-122, and Ser-131. Position 133 is an omega-N-methylarginine (Arg-133). Thr-146 is subject to Phosphothreonine. Phosphoserine is present on residues Ser-149 and Ser-174. Positions 164-204 (KVGGTNHGGGSFEEVLNSTAHASSQNASAGSRQTKDEELQC) are disordered. Over residues 179–195 (LNSTAHASSQNASAGSR) the composition is skewed to polar residues.

Belongs to the TPD52 family. Forms a homodimer or heterodimer with other members of the family.

The sequence is that of Tumor protein D53 (Tpd52l1) from Mus musculus (Mouse).